The following is a 186-amino-acid chain: ATP synthase subunit delta (186 aa).

It belongs to the ATPase delta chain family. As to quaternary structure, F-type ATPases have 2 components, F(1) - the catalytic core - and F(0) - the membrane proton channel. F(1) has five subunits: alpha(3), beta(3), gamma(1), delta(1), epsilon(1). F(0) has three main subunits: a(1), b(2) and c(10-14). The alpha and beta chains form an alternating ring which encloses part of the gamma chain. F(1) is attached to F(0) by a central stalk formed by the gamma and epsilon chains, while a peripheral stalk is formed by the delta and b chains.

It localises to the cell membrane. Its function is as follows. F(1)F(0) ATP synthase produces ATP from ADP in the presence of a proton or sodium gradient. F-type ATPases consist of two structural domains, F(1) containing the extramembraneous catalytic core and F(0) containing the membrane proton channel, linked together by a central stalk and a peripheral stalk. During catalysis, ATP synthesis in the catalytic domain of F(1) is coupled via a rotary mechanism of the central stalk subunits to proton translocation. Functionally, this protein is part of the stalk that links CF(0) to CF(1). It either transmits conformational changes from CF(0) to CF(1) or is implicated in proton conduction. This is ATP synthase subunit delta from Mycoplasmopsis agalactiae (strain NCTC 10123 / CIP 59.7 / PG2) (Mycoplasma agalactiae).